Here is a 440-residue protein sequence, read N- to C-terminus: Enolase (440 aa).

Residue Gln168 coordinates (2R)-2-phosphoglycerate. The active-site Proton donor is Glu210. Positions 249, 300, and 326 each coordinate Mg(2+). (2R)-2-phosphoglycerate contacts are provided by Lys351, Arg380, Ser381, and Lys402. Residue Lys351 is the Proton acceptor of the active site.

Belongs to the enolase family. Mg(2+) is required as a cofactor.

It is found in the cytoplasm. The protein resides in the secreted. Its subcellular location is the cell surface. The catalysed reaction is (2R)-2-phosphoglycerate = phosphoenolpyruvate + H2O. Its pathway is carbohydrate degradation; glycolysis; pyruvate from D-glyceraldehyde 3-phosphate: step 4/5. Functionally, catalyzes the reversible conversion of 2-phosphoglycerate (2-PG) into phosphoenolpyruvate (PEP). It is essential for the degradation of carbohydrates via glycolysis. The polypeptide is Enolase (Ureaplasma parvum serovar 3 (strain ATCC 27815 / 27 / NCTC 11736)).